Consider the following 423-residue polypeptide: 3-phosphoshikimate 1-carboxyvinyltransferase (423 aa).

3 residues coordinate 3-phosphoshikimate: lysine 21, serine 22, and arginine 26. Lysine 21 is a binding site for phosphoenolpyruvate. The phosphoenolpyruvate site is built by glycine 93 and arginine 123. 3-phosphoshikimate contacts are provided by serine 168, serine 169, glutamine 170, serine 196, aspartate 311, and lysine 338. Glutamine 170 contacts phosphoenolpyruvate. The active-site Proton acceptor is the aspartate 311. Arginine 342, arginine 383, and lysine 408 together coordinate phosphoenolpyruvate.

It belongs to the EPSP synthase family. As to quaternary structure, monomer.

It is found in the cytoplasm. The catalysed reaction is 3-phosphoshikimate + phosphoenolpyruvate = 5-O-(1-carboxyvinyl)-3-phosphoshikimate + phosphate. It functions in the pathway metabolic intermediate biosynthesis; chorismate biosynthesis. In terms of biological role, catalyzes the transfer of the enolpyruvyl moiety of phosphoenolpyruvate (PEP) to the 5-hydroxyl of shikimate-3-phosphate (S3P) to produce enolpyruvyl shikimate-3-phosphate and inorganic phosphate. The sequence is that of 3-phosphoshikimate 1-carboxyvinyltransferase from Methanosphaerula palustris (strain ATCC BAA-1556 / DSM 19958 / E1-9c).